Consider the following 856-residue polypeptide: Lon protease (856 aa).

A Lon N-terminal domain is found at 68 to 261; that stretch reads FPVLPLRDIV…KVLGLMESEI (194 aa). Residue 412–419 coordinates ATP; it reads GPPGVGKT. Positions 647–828 constitute a Lon proteolytic domain; that stretch reads EDQVGVVTGL…DEVLHHALLR (182 aa). Residues serine 734 and lysine 777 contribute to the active site.

The protein belongs to the peptidase S16 family. As to quaternary structure, homohexamer. Organized in a ring with a central cavity.

It is found in the cytoplasm. It catalyses the reaction Hydrolysis of proteins in presence of ATP.. Functionally, ATP-dependent serine protease that mediates the selective degradation of mutant and abnormal proteins as well as certain short-lived regulatory proteins. Required for cellular homeostasis and for survival from DNA damage and developmental changes induced by stress. Degrades polypeptides processively to yield small peptide fragments that are 5 to 10 amino acids long. Binds to DNA in a double-stranded, site-specific manner. This Azorhizobium caulinodans (strain ATCC 43989 / DSM 5975 / JCM 20966 / LMG 6465 / NBRC 14845 / NCIMB 13405 / ORS 571) protein is Lon protease.